The following is a 93-amino-acid chain: Large ribosomal subunit protein eL43 (93 aa).

A C4-type zinc finger spans residues 39-60; it reads CEFCGKYGVKRKAVGIWGCKDC.

The protein belongs to the eukaryotic ribosomal protein eL43 family.

This chain is Large ribosomal subunit protein eL43 (RPL37A), found in Brassica rapa subsp. rapa (Turnip).